A 173-amino-acid polypeptide reads, in one-letter code: Nicotinamide-nucleotide adenylyltransferase (173 aa).

Belongs to the archaeal NMN adenylyltransferase family.

The protein resides in the cytoplasm. The catalysed reaction is beta-nicotinamide D-ribonucleotide + ATP + H(+) = diphosphate + NAD(+). It functions in the pathway cofactor biosynthesis; NAD(+) biosynthesis; NAD(+) from nicotinamide D-ribonucleotide: step 1/1. The sequence is that of Nicotinamide-nucleotide adenylyltransferase from Methanosarcina mazei (strain ATCC BAA-159 / DSM 3647 / Goe1 / Go1 / JCM 11833 / OCM 88) (Methanosarcina frisia).